An 85-amino-acid polypeptide reads, in one-letter code: U4-theraphotoxin-Hhn1p (85 aa).

The N-terminal stretch at 1–22 (MKMTLIAIPTCAAVLVLHTTAA) is a signal peptide. The propeptide occupies 23–48 (EELEAESQLMEVGMPDTELEAVDGER). 3 cysteine pairs are disulfide-bonded: Cys-52-Cys-66, Cys-56-Cys-77, and Cys-71-Cys-82.

Belongs to the neurotoxin 12 (Hwtx-2) family. 02 (Hwtx-2) subfamily. In terms of tissue distribution, expressed by the venom gland.

The protein localises to the secreted. Postsynaptic neurotoxin. This chain is U4-theraphotoxin-Hhn1p, found in Cyriopagopus hainanus (Chinese bird spider).